A 750-amino-acid chain; its full sequence is Phosphoribosylformylglycinamidine synthase subunit PurL (750 aa).

His-54 is an active-site residue. Positions 57 and 101 each coordinate ATP. Glu-103 is a Mg(2+) binding site. Substrate contacts are provided by residues 104–107 (SHNH) and Arg-126. The active-site Proton acceptor is the His-105. Position 127 (Asp-127) interacts with Mg(2+). Position 251 (Gln-251) interacts with substrate. Asp-279 lines the Mg(2+) pocket. 323–325 (ESQ) provides a ligand contact to substrate. Positions 509 and 546 each coordinate ATP. A Mg(2+)-binding site is contributed by Asn-547. Position 549 (Ser-549) interacts with substrate.

This sequence belongs to the FGAMS family. As to quaternary structure, monomer. Part of the FGAM synthase complex composed of 1 PurL, 1 PurQ and 2 PurS subunits.

It localises to the cytoplasm. It carries out the reaction N(2)-formyl-N(1)-(5-phospho-beta-D-ribosyl)glycinamide + L-glutamine + ATP + H2O = 2-formamido-N(1)-(5-O-phospho-beta-D-ribosyl)acetamidine + L-glutamate + ADP + phosphate + H(+). The protein operates within purine metabolism; IMP biosynthesis via de novo pathway; 5-amino-1-(5-phospho-D-ribosyl)imidazole from N(2)-formyl-N(1)-(5-phospho-D-ribosyl)glycinamide: step 1/2. Part of the phosphoribosylformylglycinamidine synthase complex involved in the purines biosynthetic pathway. Catalyzes the ATP-dependent conversion of formylglycinamide ribonucleotide (FGAR) and glutamine to yield formylglycinamidine ribonucleotide (FGAM) and glutamate. The FGAM synthase complex is composed of three subunits. PurQ produces an ammonia molecule by converting glutamine to glutamate. PurL transfers the ammonia molecule to FGAR to form FGAM in an ATP-dependent manner. PurS interacts with PurQ and PurL and is thought to assist in the transfer of the ammonia molecule from PurQ to PurL. The polypeptide is Phosphoribosylformylglycinamidine synthase subunit PurL (Cutibacterium acnes (strain DSM 16379 / KPA171202) (Propionibacterium acnes)).